The following is a 332-amino-acid chain: Malate dehydrogenase, cytoplasmic (332 aa).

Residues 16–17 (QI), Asp-43, and Gly-90 contribute to the NAD(+) site. Position 99 (Arg-99) interacts with oxaloacetate. NAD(+) is bound by residues Gln-113 and Asn-132. Oxaloacetate-binding residues include Asn-132, Arg-163, His-188, and Ser-243. His-188 serves as the catalytic Proton acceptor.

Belongs to the LDH/MDH superfamily. MDH type 2 family. Homodimer.

Its subcellular location is the cytoplasm. It carries out the reaction (S)-malate + NAD(+) = oxaloacetate + NADH + H(+). In Beta vulgaris (Sugar beet), this protein is Malate dehydrogenase, cytoplasmic (NR1).